The primary structure comprises 338 residues: Dehydrogenase/reductase SDR family member 7 (338 aa).

Residues 1–28 form the signal peptide; that stretch reads MSWELLLWLLALCALILPLVQLLRFLRA. Residues Ser60 and Ile62 each coordinate NAD(+). Substrate is bound at residue Ser190. Tyr203, Lys207, and Ser239 together coordinate NAD(+). Catalysis depends on Tyr203, which acts as the Proton acceptor.

The protein belongs to the short-chain dehydrogenases/reductases (SDR) family.

It is found in the endoplasmic reticulum membrane. The enzyme catalyses all-trans-retinol + NADP(+) = all-trans-retinal + NADPH + H(+). The catalysed reaction is 5alpha-androstane-3alpha,17beta-diol + NADP(+) = 17beta-hydroxy-5alpha-androstan-3-one + NADPH + H(+). NADPH-dependent oxidoreductase which catalyzes the reduction of a variety of compounds bearing carbonyl groups including steroids, retinoids and xenobiotics. Catalyzes the reduction/inactivation of 5alpha-dihydrotestosterone to 3alpha-androstanediol, with a possible role in the modulation of androgen receptor function. Involved in the reduction of all-trans-retinal to all-trans-retinol. Converts cortisone to 20beta-dihydrocortisone in vitro, although the physiological relevance of this activity is questionable. Reduces exogenous compounds such as quinones (1,2-naphtoquinone, 9,10-phenantrenequinone and benzoquinone) and other xenobiotics (alpha-diketones) in vitro, suggesting a role in the biotransformation of xenobiotics with carbonyl group. A dehydrogenase activity has not been detected so far. May play a role as tumor suppressor. The sequence is that of Dehydrogenase/reductase SDR family member 7 from Mus musculus (Mouse).